The chain runs to 815 residues: MTIKNNILVIGSGSREHAITWKLLESNQVDKVILVPGNASSSTMERVITVECSKIDAESISNICKEHNVEYVFVGPEVPLVDGIVDGLKRKGISCFGPTKKAAQLEGSKVFCKDFMARNNIPSARYQTFTDYNKAKQYIESLNYKIVLKASGCAAGKGVLIPNNKEEELEGLKRIMVDKEFGSAGDEIVIEEFLDGEECSLMCFSDGYSLVVMPPAQDHKRIFDGDKGANTGGMGAYAPAPFIVDCNNNATTDKSKSKSSFGTIIDRCVETILKPTINGMRKEGKPFVGVLFAGLMVSSSSSTTNDKVINVLEFNCRMGDPETQVVLPLLETDLFEIVLACIEGRLDGLDVKWSNKFAVTVVAASKGYPDSYPKGLKINGLLENKNTNDNIIFQAGTTVNGSNDIVTNGGRVLSCTSVSESLEDAIKNSYKLIETISFEGMQYRKDIGQKALNHLERKKQQQANSKQSVSYSESGVDIERGDAVVDNIGPLAKATTRLGCVSDLGGFGALFDTKAAGFRDPILVSGTDGVGTKLKIAQELGIHDSIGIDLVAMCVNDVVVQGAEPLFFLDYFATGRIHVDVATQVVSGIARGCKESGCALIGGETAEMPGMYKDGEYDLAGFSVGAVERDQMLPSNIQEGNILLGLASSGVHSNGYSLVRYLIETKSGGLTYNSIAPFDSSKTLGQVLLTPTKLYVLSCLAAIKSGGVNGLAHITGGGITENLPRVIPDGLDCEVELGSWEILPIFKYLVELGNMETEELLKTFNSGIGMILIVSPDKVDSITKSLESNNEKVYKIGKIINSKTSKQSKSKVIYK.

A GARS region spans residues 6–452 (NILVIGSGSR…YRKDIGQKAL (447 aa)). Residues 113–343 (KDFMARNNIP…LFEIVLACIE (231 aa)) form the ATP-grasp domain. Residue 139–200 (IESLNYKIVL…EEFLDGEECS (62 aa)) coordinates ATP. Residues Glu-313 and Asn-315 each coordinate Mg(2+). The AIRS stretch occupies residues 469 to 801 (VSYSESGVDI…KVYKIGKIIN (333 aa)).

In the N-terminal section; belongs to the GARS family. This sequence in the C-terminal section; belongs to the AIR synthase family. Mg(2+) is required as a cofactor. Mn(2+) serves as cofactor.

It is found in the cytoplasm. It localises to the cytosol. The catalysed reaction is 5-phospho-beta-D-ribosylamine + glycine + ATP = N(1)-(5-phospho-beta-D-ribosyl)glycinamide + ADP + phosphate + H(+). It carries out the reaction 2-formamido-N(1)-(5-O-phospho-beta-D-ribosyl)acetamidine + ATP = 5-amino-1-(5-phospho-beta-D-ribosyl)imidazole + ADP + phosphate + H(+). The protein operates within purine metabolism; IMP biosynthesis via de novo pathway; 5-amino-1-(5-phospho-D-ribosyl)imidazole from N(2)-formyl-N(1)-(5-phospho-D-ribosyl)glycinamide: step 2/2. It functions in the pathway purine metabolism; IMP biosynthesis via de novo pathway; N(1)-(5-phospho-D-ribosyl)glycinamide from 5-phospho-alpha-D-ribose 1-diphosphate: step 2/2. In terms of biological role, catalyzes the second and fifth step in the 'de novo' purine biosynthesis pathway; contains phosphoribosylamine--glycine ligase (GARS) and phosphoribosylformylglycinamidine cyclo-ligase (AIRS) activities. In Dictyostelium discoideum (Social amoeba), this protein is Bifunctional purine biosynthetic protein purD (purD).